The sequence spans 263 residues: uncharacterized protein (263 aa).

Residue 31 to 38 participates in ATP binding; it reads GPTGSGKT.

Belongs to the CbbQ/NirQ/NorQ/GpvN family.

This is an uncharacterized protein from Staphylococcus epidermidis (strain ATCC 12228 / FDA PCI 1200).